The primary structure comprises 580 residues: 2-succinyl-5-enolpyruvyl-6-hydroxy-3-cyclohexene-1-carboxylate synthase (580 aa).

This sequence belongs to the TPP enzyme family. MenD subfamily. As to quaternary structure, homodimer. It depends on Mg(2+) as a cofactor. Mn(2+) serves as cofactor. Thiamine diphosphate is required as a cofactor.

It carries out the reaction isochorismate + 2-oxoglutarate + H(+) = 5-enolpyruvoyl-6-hydroxy-2-succinyl-cyclohex-3-ene-1-carboxylate + CO2. The protein operates within quinol/quinone metabolism; 1,4-dihydroxy-2-naphthoate biosynthesis; 1,4-dihydroxy-2-naphthoate from chorismate: step 2/7. It functions in the pathway quinol/quinone metabolism; menaquinone biosynthesis. Functionally, catalyzes the thiamine diphosphate-dependent decarboxylation of 2-oxoglutarate and the subsequent addition of the resulting succinic semialdehyde-thiamine pyrophosphate anion to isochorismate to yield 2-succinyl-5-enolpyruvyl-6-hydroxy-3-cyclohexene-1-carboxylate (SEPHCHC). This Listeria welshimeri serovar 6b (strain ATCC 35897 / DSM 20650 / CCUG 15529 / CIP 8149 / NCTC 11857 / SLCC 5334 / V8) protein is 2-succinyl-5-enolpyruvyl-6-hydroxy-3-cyclohexene-1-carboxylate synthase.